A 184-amino-acid polypeptide reads, in one-letter code: Endoribonuclease YbeY (184 aa).

His-151, His-155, and His-161 together coordinate Zn(2+).

The protein belongs to the endoribonuclease YbeY family. It depends on Zn(2+) as a cofactor.

The protein resides in the cytoplasm. Its function is as follows. Single strand-specific metallo-endoribonuclease involved in late-stage 70S ribosome quality control and in maturation of the 3' terminus of the 16S rRNA. In Prochlorococcus marinus (strain NATL2A), this protein is Endoribonuclease YbeY.